A 227-amino-acid polypeptide reads, in one-letter code: Small ribosomal subunit protein uS3 (227 aa).

Positions 39–107 (VRQLLQKRLK…PVHITIEEVR (69 aa)) constitute a KH type-2 domain.

Belongs to the universal ribosomal protein uS3 family. Part of the 30S ribosomal subunit. Forms a tight complex with proteins S10 and S14.

In terms of biological role, binds the lower part of the 30S subunit head. Binds mRNA in the 70S ribosome, positioning it for translation. The chain is Small ribosomal subunit protein uS3 (rpsC) from Coxiella burnetii (strain RSA 493 / Nine Mile phase I).